A 290-amino-acid chain; its full sequence is Protoheme IX farnesyltransferase (290 aa).

The next 9 membrane-spanning stretches (helical) occupy residues 8–28 (LTKP…YFLA), 36–56 (LSLL…GCVV), 81–101 (INIE…TGLL), 108–128 (LSAV…TMWY), 133–153 (VYGT…GYLA), 163–183 (VLLF…IAMF), 209–229 (IMIY…FGHT), 230–247 (GYEY…WFKV), and 270–290 (LAIT…SITF).

It belongs to the UbiA prenyltransferase family. Protoheme IX farnesyltransferase subfamily.

Its subcellular location is the cell inner membrane. The catalysed reaction is heme b + (2E,6E)-farnesyl diphosphate + H2O = Fe(II)-heme o + diphosphate. Its pathway is porphyrin-containing compound metabolism; heme O biosynthesis; heme O from protoheme: step 1/1. Its function is as follows. Converts heme B (protoheme IX) to heme O by substitution of the vinyl group on carbon 2 of heme B porphyrin ring with a hydroxyethyl farnesyl side group. The chain is Protoheme IX farnesyltransferase from Aliivibrio salmonicida (strain LFI1238) (Vibrio salmonicida (strain LFI1238)).